A 407-amino-acid polypeptide reads, in one-letter code: MSDPVGGLKYLTTSPGIGGKIKVYPEDFIVKEVIPKSIFKAGKCKIYILKKKNWETMAAIKEIAKRVGVHYSEIGFAGTKDRHAVTYQYISICRDVNLEEVKIRDIELKFVGYGRPLKLGFLLGNFFKIRVRESNPSLLPSVIEEAKEKGGFPNYFGIQRFGEKRSVNHVVGKLLLLGKYEEAAEVFLGFPGKGMEGDEARRKFLETKDVDLALREFPNFLRYERAMLYRYKETGSWKKAFLVLPRPILRIFIHSFQSYLFNLYLSRRIEEGLPLNKALPGDIVIQVKKGIPLRKRTYRVTENNVDFVNRKIKEGEAMVSGPIFGYMYRKGKGIPGRLEEEILEEAGVKLEYFKKLPKPMREPGGRRELLIRPMKFAYKVEDRDVIFRFFLPKGVYATSVLREIMKN.

D81 serves as the catalytic Nucleophile. The TRUD domain maps to 151–372; sequence GFPNYFGIQR…PGGRRELLIR (222 aa).

It belongs to the pseudouridine synthase TruD family.

It catalyses the reaction uridine(13) in tRNA = pseudouridine(13) in tRNA. Could be responsible for synthesis of pseudouridine from uracil-13 in transfer RNAs. This Pyrococcus furiosus (strain ATCC 43587 / DSM 3638 / JCM 8422 / Vc1) protein is Probable tRNA pseudouridine synthase D.